A 327-amino-acid chain; its full sequence is Phenylalanine--tRNA ligase alpha subunit (327 aa).

E252 is a binding site for Mg(2+).

This sequence belongs to the class-II aminoacyl-tRNA synthetase family. Phe-tRNA synthetase alpha subunit type 1 subfamily. Tetramer of two alpha and two beta subunits. Requires Mg(2+) as cofactor.

Its subcellular location is the cytoplasm. It catalyses the reaction tRNA(Phe) + L-phenylalanine + ATP = L-phenylalanyl-tRNA(Phe) + AMP + diphosphate + H(+). This Klebsiella pneumoniae (strain 342) protein is Phenylalanine--tRNA ligase alpha subunit.